A 472-amino-acid chain; its full sequence is Ribulose bisphosphate carboxylase large chain (472 aa).

Residues Asn116 and Thr166 each coordinate substrate. The active-site Proton acceptor is Lys168. Lys170 serves as a coordination point for substrate. Mg(2+)-binding residues include Lys194, Asp196, and Glu197. An N6-carboxylysine modification is found at Lys194. His287 serves as the catalytic Proton acceptor. Substrate-binding residues include Arg288, His320, and Ser372.

Belongs to the RuBisCO large chain family. Type I subfamily. In terms of assembly, heterohexadecamer of 8 large chains and 8 small chains. The cofactor is Mg(2+).

The catalysed reaction is 2 (2R)-3-phosphoglycerate + 2 H(+) = D-ribulose 1,5-bisphosphate + CO2 + H2O. It carries out the reaction D-ribulose 1,5-bisphosphate + O2 = 2-phosphoglycolate + (2R)-3-phosphoglycerate + 2 H(+). Its function is as follows. RuBisCO catalyzes two reactions: the carboxylation of D-ribulose 1,5-bisphosphate, the primary event in carbon dioxide fixation, as well as the oxidative fragmentation of the pentose substrate. Both reactions occur simultaneously and in competition at the same active site. This is Ribulose bisphosphate carboxylase large chain from Nitrobacter vulgaris.